Reading from the N-terminus, the 363-residue chain is Pyrimidine monooxygenase RutA (363 aa).

Residues I49 to K50, N115, E124, R140 to Y141, and S190 contribute to the FMN site.

It belongs to the NtaA/SnaA/DszA monooxygenase family. RutA subfamily.

The catalysed reaction is uracil + FMNH2 + NADH + O2 = (Z)-3-ureidoacrylate + FMN + NAD(+) + H2O + H(+). The enzyme catalyses thymine + FMNH2 + NADH + O2 = (Z)-2-methylureidoacrylate + FMN + NAD(+) + H2O + H(+). Its function is as follows. Catalyzes the pyrimidine ring opening between N-3 and C-4 by an unusual flavin hydroperoxide-catalyzed mechanism, adding oxygen atoms in the process to yield ureidoacrylate peracid, that immediately reacts with FMN forming ureidoacrylate and FMN-N(5)-oxide. The FMN-N(5)-oxide reacts spontaneously with NADH to produce FMN. Requires the flavin reductase RutF to regenerate FMN in vivo. The chain is Pyrimidine monooxygenase RutA from Escherichia coli O157:H7 (strain EC4115 / EHEC).